A 768-amino-acid chain; its full sequence is Post-transcriptional regulator MKT1 (768 aa).

The protein belongs to the XPG/RAD2 endonuclease family. As to quaternary structure, interacts with PBP1.

The protein localises to the cytoplasm. It localises to the cytosol. In terms of biological role, involved in 3'-UTR mediated RNA regulation. Complexes with PBP1 to promote mRNA interactions with poly(A)-binding protein. The protein is Post-transcriptional regulator MKT1 of Cryptococcus neoformans var. grubii serotype A (strain H99 / ATCC 208821 / CBS 10515 / FGSC 9487) (Filobasidiella neoformans var. grubii).